A 160-amino-acid chain; its full sequence is Putative control protein C.MjaVP (160 aa).

May be involved in control of expression of the type II restriction enzyme MjaV and/or its methyltransferase M.MjaV. The polypeptide is Putative control protein C.MjaVP (Methanocaldococcus jannaschii (strain ATCC 43067 / DSM 2661 / JAL-1 / JCM 10045 / NBRC 100440) (Methanococcus jannaschii)).